The following is a 1128-amino-acid chain: Major DNA-binding protein (1128 aa).

The tract at residues 1104 to 1128 (LGGGGQGSGGRRKRRLATVLPGLEV) is required for nuclear localization.

This sequence belongs to the herpesviridae major DNA-binding protein family. As to quaternary structure, homooligomers. Forms double-helical filaments necessary for the formation of replication compartments within the host nucleus. Interacts with the origin-binding protein. Interacts with the helicase primase complex; this interaction stimulates primer synthesis activity of the helicase-primase complex. Interacts with the DNA polymerase. Interacts with the alkaline exonuclease; this interaction increases its nuclease processivity.

Its subcellular location is the virion tegument. The protein localises to the host nucleus. In terms of biological role, plays several crucial roles in viral infection. Participates in the opening of the viral DNA origin to initiate replication by interacting with the origin-binding protein. May disrupt loops, hairpins and other secondary structures present on ssDNA to reduce and eliminate pausing of viral DNA polymerase at specific sites during elongation. Promotes viral DNA recombination by performing strand-transfer, characterized by the ability to transfer a DNA strand from a linear duplex to a complementary single-stranded DNA circle. Can also catalyze the renaturation of complementary single strands. Additionally, reorganizes the host cell nucleus, leading to the formation of prereplicative sites and replication compartments. This process is driven by the protein which can form double-helical filaments in the absence of DNA. This is Major DNA-binding protein from Epstein-Barr virus (strain GD1) (HHV-4).